The primary structure comprises 29 residues: Cyclotide psyleio D (29 aa).

Residues 1–29 (GLPVCGESCFGGTCNTPGCSCTWPVCTRD) constitute a cross-link (cyclopeptide (Gly-Asp)). Cystine bridges form between Cys5–Cys19, Cys9–Cys21, and Cys14–Cys26.

In terms of processing, this is a cyclic peptide.

In terms of biological role, probably participates in a plant defense mechanism. In Psychotria brachyceras, this protein is Cyclotide psyleio D.